The primary structure comprises 658 residues: Threonine--tRNA ligase (658 aa).

The TGS domain maps to Met-1–Glu-61. The catalytic stretch occupies residues Asp-259 to Pro-554. Residues Cys-353, His-404, and His-531 each contribute to the Zn(2+) site.

This sequence belongs to the class-II aminoacyl-tRNA synthetase family. As to quaternary structure, homodimer. Requires Zn(2+) as cofactor.

The protein localises to the cytoplasm. It carries out the reaction tRNA(Thr) + L-threonine + ATP = L-threonyl-tRNA(Thr) + AMP + diphosphate + H(+). Functionally, catalyzes the attachment of threonine to tRNA(Thr) in a two-step reaction: L-threonine is first activated by ATP to form Thr-AMP and then transferred to the acceptor end of tRNA(Thr). Also edits incorrectly charged L-seryl-tRNA(Thr). In Streptomyces griseus subsp. griseus (strain JCM 4626 / CBS 651.72 / NBRC 13350 / KCC S-0626 / ISP 5235), this protein is Threonine--tRNA ligase.